The sequence spans 363 residues: Pyrimidine monooxygenase RutA (363 aa).

FMN is bound by residues 49–50, Asn-115, Glu-124, 140–141, and Ser-190; these read IK and RY.

This sequence belongs to the NtaA/SnaA/DszA monooxygenase family. RutA subfamily.

The enzyme catalyses uracil + FMNH2 + NADH + O2 = (Z)-3-ureidoacrylate + FMN + NAD(+) + H2O + H(+). The catalysed reaction is thymine + FMNH2 + NADH + O2 = (Z)-2-methylureidoacrylate + FMN + NAD(+) + H2O + H(+). Functionally, catalyzes the pyrimidine ring opening between N-3 and C-4 by an unusual flavin hydroperoxide-catalyzed mechanism, adding oxygen atoms in the process to yield ureidoacrylate peracid, that immediately reacts with FMN forming ureidoacrylate and FMN-N(5)-oxide. The FMN-N(5)-oxide reacts spontaneously with NADH to produce FMN. Requires the flavin reductase RutF to regenerate FMN in vivo. The chain is Pyrimidine monooxygenase RutA from Enterobacter sp. (strain 638).